Here is a 254-residue protein sequence, read N- to C-terminus: Probable pectate lyase E (254 aa).

An N-terminal signal peptide occupies residues 1–17 (MYQPLLLLPLLLTSAFA). N-linked (GlcNAc...) asparagine glycosylation is present at asparagine 175. A disordered region spans residues 228 to 254 (DNNKKEPAKKSSGPSNACKYKEPLASC).

Belongs to the polysaccharide lyase 3 family. It depends on Ca(2+) as a cofactor.

The protein localises to the secreted. The enzyme catalyses Eliminative cleavage of (1-&gt;4)-alpha-D-galacturonan to give oligosaccharides with 4-deoxy-alpha-D-galact-4-enuronosyl groups at their non-reducing ends.. Functionally, pectinolytic enzyme consist of four classes of enzymes: pectin lyase, polygalacturonase, pectin methylesterase and rhamnogalacturonase. Among pectinolytic enzymes, pectin lyase is the most important in depolymerization of pectin, since it cleaves internal glycosidic bonds of highly methylated pectins. Favors pectate, the anion, over pectin, the methyl ester. This chain is Probable pectate lyase E (plyE), found in Aspergillus fumigatus (strain ATCC MYA-4609 / CBS 101355 / FGSC A1100 / Af293) (Neosartorya fumigata).